Here is a 183-residue protein sequence, read N- to C-terminus: Translation initiation factor IF-3 (183 aa).

Belongs to the IF-3 family. In terms of assembly, monomer.

It is found in the cytoplasm. IF-3 binds to the 30S ribosomal subunit and shifts the equilibrium between 70S ribosomes and their 50S and 30S subunits in favor of the free subunits, thus enhancing the availability of 30S subunits on which protein synthesis initiation begins. The polypeptide is Translation initiation factor IF-3 (Aliivibrio salmonicida (strain LFI1238) (Vibrio salmonicida (strain LFI1238))).